Here is a 384-residue protein sequence, read N- to C-terminus: Dual-specificity RNA methyltransferase RlmN (384 aa).

E105 acts as the Proton acceptor in catalysis. A Radical SAM core domain is found at 111–350 (EDDRATLCVS…TIVRKTRGDD (240 aa)). An intrachain disulfide couples C118 to C355. [4Fe-4S] cluster contacts are provided by C125, C129, and C132. S-adenosyl-L-methionine-binding positions include 179–180 (GE), S211, 233–235 (SLH), and N312. C355 serves as the catalytic S-methylcysteine intermediate.

The protein belongs to the radical SAM superfamily. RlmN family. The cofactor is [4Fe-4S] cluster.

The protein resides in the cytoplasm. The catalysed reaction is adenosine(2503) in 23S rRNA + 2 reduced [2Fe-2S]-[ferredoxin] + 2 S-adenosyl-L-methionine = 2-methyladenosine(2503) in 23S rRNA + 5'-deoxyadenosine + L-methionine + 2 oxidized [2Fe-2S]-[ferredoxin] + S-adenosyl-L-homocysteine. It carries out the reaction adenosine(37) in tRNA + 2 reduced [2Fe-2S]-[ferredoxin] + 2 S-adenosyl-L-methionine = 2-methyladenosine(37) in tRNA + 5'-deoxyadenosine + L-methionine + 2 oxidized [2Fe-2S]-[ferredoxin] + S-adenosyl-L-homocysteine. In terms of biological role, specifically methylates position 2 of adenine 2503 in 23S rRNA and position 2 of adenine 37 in tRNAs. m2A2503 modification seems to play a crucial role in the proofreading step occurring at the peptidyl transferase center and thus would serve to optimize ribosomal fidelity. The sequence is that of Dual-specificity RNA methyltransferase RlmN from Escherichia fergusonii (strain ATCC 35469 / DSM 13698 / CCUG 18766 / IAM 14443 / JCM 21226 / LMG 7866 / NBRC 102419 / NCTC 12128 / CDC 0568-73).